Consider the following 230-residue polypeptide: Transmembrane protein 221 (230 aa).

A run of 4 helical transmembrane segments spans residues 12–32, 73–93, 125–145, and 147–167; these read AMTLLGIPAAVLVALAAQLLF, ALAALAQVLGLSCLLLAALCG, LFCCGVSVYLAALAIYALLLF, and IEAGAAAASILGSGALILVAI. Positions 184-230 are disordered; it reads RELSPPSFEDEPARPSEDSKSGCRAQPPQDEETETPIGAVTHQGSHF. Residues 194–204 are compositionally biased toward basic and acidic residues; sequence EPARPSEDSKS.

The protein resides in the membrane. The chain is Transmembrane protein 221 (Tmem221) from Mus musculus (Mouse).